The sequence spans 323 residues: Transposase for insertion sequence element IS6120 (323 aa).

Residues 300–323 form a disordered region; the sequence is ERPTDITPPTSPSDGGQHAGTEVA. A compositionally biased stretch (low complexity) spans 304–313; it reads DITPPTSPSD.

It belongs to the transposase mutator family.

Required for the transposition of the insertion element. In Mycolicibacterium smegmatis (Mycobacterium smegmatis), this protein is Transposase for insertion sequence element IS6120.